Here is a 182-residue protein sequence, read N- to C-terminus: Ribosome maturation factor RimM (182 aa).

Positions 103–182 (VGDYYWKDLI…TIEVDWDPGF (80 aa)) constitute a PRC barrel domain.

It belongs to the RimM family. In terms of assembly, binds ribosomal protein uS19.

Its subcellular location is the cytoplasm. In terms of biological role, an accessory protein needed during the final step in the assembly of 30S ribosomal subunit, possibly for assembly of the head region. Essential for efficient processing of 16S rRNA. May be needed both before and after RbfA during the maturation of 16S rRNA. It has affinity for free ribosomal 30S subunits but not for 70S ribosomes. This is Ribosome maturation factor RimM from Pectobacterium atrosepticum (strain SCRI 1043 / ATCC BAA-672) (Erwinia carotovora subsp. atroseptica).